A 468-amino-acid polypeptide reads, in one-letter code: tRNA modification GTPase MnmE (468 aa).

(6S)-5-formyl-5,6,7,8-tetrahydrofolate is bound by residues Arg29, Glu97, and Lys136. The region spanning 232–390 (GFELAIVGRP…VVAHIVARME (159 aa)) is the TrmE-type G domain. Asn242 contacts K(+). GTP-binding positions include 242 to 247 (NVGKSS), 261 to 267 (TDLAGTT), and 286 to 289 (DTAG). Mg(2+) is bound at residue Ser246. K(+)-binding residues include Thr261, Leu263, and Thr266. Thr267 serves as a coordination point for Mg(2+). (6S)-5-formyl-5,6,7,8-tetrahydrofolate is bound at residue Lys468.

It belongs to the TRAFAC class TrmE-Era-EngA-EngB-Septin-like GTPase superfamily. TrmE GTPase family. Homodimer. Heterotetramer of two MnmE and two MnmG subunits. The cofactor is K(+).

The protein localises to the cytoplasm. Exhibits a very high intrinsic GTPase hydrolysis rate. Involved in the addition of a carboxymethylaminomethyl (cmnm) group at the wobble position (U34) of certain tRNAs, forming tRNA-cmnm(5)s(2)U34. In Magnetococcus marinus (strain ATCC BAA-1437 / JCM 17883 / MC-1), this protein is tRNA modification GTPase MnmE.